We begin with the raw amino-acid sequence, 132 residues long: Long-chain acyl-CoA thioesterase FadM (132 aa).

Residue aspartate 13 is part of the active site.

The protein belongs to the 4-hydroxybenzoyl-CoA thioesterase family. As to quaternary structure, homotetramer.

The catalysed reaction is (3E,5Z)-tetradecadienoyl-CoA + H2O = (3E,5Z)-tetradecadienoate + CoA + H(+). It carries out the reaction (3E,5Z)-dodecadienoyl-CoA + H2O = (3E,5Z)-dodecadienoate + CoA + H(+). It catalyses the reaction (9Z)-octadecenoyl-CoA + H2O = (9Z)-octadecenoate + CoA + H(+). The enzyme catalyses octadecanoyl-CoA + H2O = octadecanoate + CoA + H(+). The catalysed reaction is hexadecanoyl-CoA + H2O = hexadecanoate + CoA + H(+). It carries out the reaction (3S)-hydroxytetradecanoyl-CoA + H2O = (3S)-hydroxytetradecanoate + CoA + H(+). It catalyses the reaction tetradecanoyl-CoA + H2O = tetradecanoate + CoA + H(+). Long-chain acyl-CoA thioesterase that could be involved in beta-oxidation of fatty acids. Is most active with 3,5-tetradecadienoyl-CoA, a metabolite of oleic acid that is hydrolyzed during oleate beta-oxidation, but can also use other substrates such as 3,5-dodecadienoyl-CoA, 9-cis-octadecenoyl-CoA, octadecanoyl-CoA, hexadecanoyl-CoA, 3-hydroxytetradecanoyl-CoA and tetradecanoyl-CoA. The protein is Long-chain acyl-CoA thioesterase FadM of Escherichia coli (strain K12).